Here is a 112-residue protein sequence, read N- to C-terminus: MKKIEAIIKPFKLDEVKEALHEIGLQGITVTEAKGFGRQKGHTELYRGAEYVVDFLPKVKIELVIEDALVERAIEAIQQAAQTGRIGDGKIFVYAIEEAIRIRTGERGGDAI.

Tyr51 carries the post-translational modification O-UMP-tyrosine.

The protein belongs to the P(II) protein family. As to quaternary structure, homotrimer.

Its function is as follows. P-II indirectly controls the transcription of the glutamine synthetase gene (glnA). P-II prevents NR-II-catalyzed conversion of NR-I to NR-I-phosphate, the transcriptional activator of glnA. When P-II is uridylylated to P-II-UMP, these events are reversed. When the ratio of Gln to 2-ketoglutarate decreases, P-II is uridylylated to P-II-UMP, which causes the deadenylation of glutamine synthetase, so activating the enzyme. This is Nitrogen regulatory protein P-II (glnB) from Rhodospirillum rubrum (strain ATCC 11170 / ATH 1.1.1 / DSM 467 / LMG 4362 / NCIMB 8255 / S1).